Consider the following 347-residue polypeptide: Probable RNA methyltransferase azo0122 (347 aa).

E89 (proton acceptor) is an active-site residue. The Radical SAM core domain occupies 92-318 (LLLRDGLCVS…AKLRQSAGQD (227 aa)). The cysteines at positions 99 and 323 are disulfide-linked. Positions 106, 110, and 113 each coordinate [4Fe-4S] cluster. S-adenosyl-L-methionine-binding positions include 151 to 152 (GE), S181, 204 to 206 (SLH), and N280. The S-methylcysteine intermediate role is filled by C323.

Belongs to the radical SAM superfamily. RlmN family. The cofactor is [4Fe-4S] cluster.

Its subcellular location is the cytoplasm. This is Probable RNA methyltransferase azo0122 from Azoarcus sp. (strain BH72).